The primary structure comprises 56 residues: VFVALILAIAIGQSEAGWLKKIGKKIERVGQHTRDATIQGLGIAQQAANVAATARG.

Residue arginine 55 is modified to Arginine amide.

Belongs to the cecropin family.

The protein localises to the secreted. Its function is as follows. Cecropins have lytic and antibacterial activity against several Gram-positive and Gram-negative bacteria. This chain is Cecropin-A2 (CecA2), found in Drosophila yakuba (Fruit fly).